Reading from the N-terminus, the 355-residue chain is Lamassu protein LmuA (355 aa).

In terms of biological role, component of antiviral defense system Lamassu type II, composed of LmuA and LmuB. Expression of Lamassu type II in B.subtilis (strain BEST7003) confers resistance to phage SpBeta. May be a nuclease. The protein is Lamassu protein LmuA of Bacillus cereus (strain VD014).